Here is a 110-residue protein sequence, read N- to C-terminus: Large ribosomal subunit protein uL22 (110 aa).

This sequence belongs to the universal ribosomal protein uL22 family. In terms of assembly, part of the 50S ribosomal subunit.

In terms of biological role, this protein binds specifically to 23S rRNA; its binding is stimulated by other ribosomal proteins, e.g. L4, L17, and L20. It is important during the early stages of 50S assembly. It makes multiple contacts with different domains of the 23S rRNA in the assembled 50S subunit and ribosome. Its function is as follows. The globular domain of the protein is located near the polypeptide exit tunnel on the outside of the subunit, while an extended beta-hairpin is found that lines the wall of the exit tunnel in the center of the 70S ribosome. In Saccharophagus degradans (strain 2-40 / ATCC 43961 / DSM 17024), this protein is Large ribosomal subunit protein uL22.